Consider the following 78-residue polypeptide: Exodeoxyribonuclease 7 small subunit (78 aa).

The protein belongs to the XseB family. As to quaternary structure, heterooligomer composed of large and small subunits.

The protein localises to the cytoplasm. It carries out the reaction Exonucleolytic cleavage in either 5'- to 3'- or 3'- to 5'-direction to yield nucleoside 5'-phosphates.. Functionally, bidirectionally degrades single-stranded DNA into large acid-insoluble oligonucleotides, which are then degraded further into small acid-soluble oligonucleotides. The protein is Exodeoxyribonuclease 7 small subunit of Pediococcus pentosaceus (strain ATCC 25745 / CCUG 21536 / LMG 10740 / 183-1w).